A 430-amino-acid polypeptide reads, in one-letter code: Glutamate-1-semialdehyde 2,1-aminomutase (430 aa).

N6-(pyridoxal phosphate)lysine is present on K267.

It belongs to the class-III pyridoxal-phosphate-dependent aminotransferase family. HemL subfamily. As to quaternary structure, homodimer. Requires pyridoxal 5'-phosphate as cofactor.

It localises to the cytoplasm. It carries out the reaction (S)-4-amino-5-oxopentanoate = 5-aminolevulinate. The protein operates within porphyrin-containing compound metabolism; protoporphyrin-IX biosynthesis; 5-aminolevulinate from L-glutamyl-tRNA(Glu): step 2/2. The polypeptide is Glutamate-1-semialdehyde 2,1-aminomutase (Lawsonia intracellularis (strain PHE/MN1-00)).